A 658-amino-acid polypeptide reads, in one-letter code: Aspartate--tRNA ligase, mitochondrial (658 aa).

Glutamate 198 serves as a coordination point for L-aspartate. The aspartate stretch occupies residues 226–229; the sequence is QQYK. Arginine 248 is an L-aspartate binding site. Residues 248 to 250 and glutamate 553 contribute to the ATP site; that span reads RDE. Arginine 560 contributes to the L-aspartate binding site. 604 to 607 is an ATP binding site; sequence GFDR.

It belongs to the class-II aminoacyl-tRNA synthetase family. Type 1 subfamily.

It localises to the mitochondrion matrix. It carries out the reaction tRNA(Asp) + L-aspartate + ATP = L-aspartyl-tRNA(Asp) + AMP + diphosphate. Functionally, catalyzes the attachment of aspartate to tRNA(Asp) in the mitochondrion. The sequence is that of Aspartate--tRNA ligase, mitochondrial (MSD1) from Saccharomyces cerevisiae (strain ATCC 204508 / S288c) (Baker's yeast).